Here is a 159-residue protein sequence, read N- to C-terminus: SsrA-binding protein (159 aa).

The protein belongs to the SmpB family.

The protein resides in the cytoplasm. Functionally, required for rescue of stalled ribosomes mediated by trans-translation. Binds to transfer-messenger RNA (tmRNA), required for stable association of tmRNA with ribosomes. tmRNA and SmpB together mimic tRNA shape, replacing the anticodon stem-loop with SmpB. tmRNA is encoded by the ssrA gene; the 2 termini fold to resemble tRNA(Ala) and it encodes a 'tag peptide', a short internal open reading frame. During trans-translation Ala-aminoacylated tmRNA acts like a tRNA, entering the A-site of stalled ribosomes, displacing the stalled mRNA. The ribosome then switches to translate the ORF on the tmRNA; the nascent peptide is terminated with the 'tag peptide' encoded by the tmRNA and targeted for degradation. The ribosome is freed to recommence translation, which seems to be the essential function of trans-translation. The chain is SsrA-binding protein from Mycobacteroides abscessus (strain ATCC 19977 / DSM 44196 / CCUG 20993 / CIP 104536 / JCM 13569 / NCTC 13031 / TMC 1543 / L948) (Mycobacterium abscessus).